A 145-amino-acid chain; its full sequence is Histone H3-like centromeric protein A (145 aa).

Over residues 1–19 (MPRHTSAHKRKPSTPRRRS) the composition is skewed to basic residues. Residues 1-54 (MPRHTSAHKRKPSTPRRRSPPASLPPPAGSRTRRHSGPSGSSPRKKHKFRPGTR) form a disordered region. A Phosphoserine modification is found at Ser-19. The H3-like stretch occupies residues 51–145 (PGTRALMEIR…ARRIRGVEHM (95 aa)).

Belongs to the histone H3 family. Component of centromeric nucleosomes, where DNA is wrapped around a histone octamer core. The octamer contains two molecules each of H2A, H2B, CENPA and H4 assembled in one CENPA-H4 heterotetramer and two H2A-H2B heterodimers. CENPA modulates the DNA-binding characteristics of nucleosomes so that protruding DNA ends have higher flexibility than in nucleosomes containing conventional histone H3.

It localises to the nucleus. Its subcellular location is the chromosome. The protein resides in the centromere. Histone H3-like nucleosomal protein that is specifically found in centromeric nucleosomes. Replaces conventional H3 in the nucleosome core of centromeric chromatin that serves as an assembly site for the inner kinetochore. The presence of CENPA subtly modifies the nucleosome structure and the way DNA is wrapped around the nucleosome and gives rise to protruding DNA ends that are less well-ordered and rigid compared to nucleosomes containing histone H3. May serve as an epigenetic mark that propagates centromere identity through replication and cell division. Required for recruitment and assembly of kinetochore proteins, and as a consequence required for progress through mitosis, chromosome segregation and cytokinesis. The sequence is that of Histone H3-like centromeric protein A (cenpa) from Danio rerio (Zebrafish).